The primary structure comprises 366 residues: Growth hormone secretagogue receptor type 1 (366 aa).

Residues 1 to 40 (MWNATPSEEPGPNLTLPDLGWDAPPENDSLVEELLPLFPT) are Extracellular-facing. Residues Asn-13 and Asn-27 are each glycosylated (N-linked (GlcNAc...) asparagine). A helical transmembrane segment spans residues 41–66 (PLLAGVTATCVALFVVGIAGNLLTML). The Cytoplasmic portion of the chain corresponds to 67-72 (VVSRFR). A helical membrane pass occupies residues 73–96 (EMRTTTNLYLSSMAFSDLLIFLCM). The Extracellular segment spans residues 97–117 (PLDLFRLWQYRPWNLGNLLCK). Cys-116 and Cys-198 are disulfide-bonded. A helical transmembrane segment spans residues 118-139 (LFQFVSESCTYATVLTITALSV). The Cytoplasmic portion of the chain corresponds to 140-162 (ERYFAICFPLRAKVVVTKGRVKL). The helical transmembrane segment at 163-183 (VILVIWAVAFCSAGPIFVLVG) threads the bilayer. The Extracellular segment spans residues 184–211 (VEHDNGTDPRDTNECRATEFAVRSGLLT). A helical membrane pass occupies residues 212 to 235 (VMVWVSSVFFFLPVFCLTVLYSLI). Residues 236–263 (GRKLWRRKRGEAAVGSSLRDQNHKQTVK) are Cytoplasmic-facing. Residues 264–285 (MLAVVVFAFILCWLPFHVGRYL) form a helical membrane-spanning segment. Residues 286-302 (FSKSLEPGSVEIAQISQ) are Extracellular-facing. A helical transmembrane segment spans residues 303-326 (YCNLVSFVLFYLSAAINPILYNIM). Residues 327 to 366 (SKKYRVAVFKLLGFEPFSQRKLSTLKDESSRAWTESSINT) lie on the Cytoplasmic side of the membrane.

Belongs to the G-protein coupled receptor 1 family. In terms of tissue distribution, pituitary and hypothalamus.

The protein localises to the cell membrane. Functionally, receptor for ghrelin, coupled to G-alpha-11 proteins. Stimulates growth hormone secretion. Also binds other growth hormone releasing peptides (GHRP) (e.g. Met-enkephalin and GHRP-6) as well as non-peptide, low molecular weight secretagogues (e.g. L-692,429, MK-0677, adenosine). The protein is Growth hormone secretagogue receptor type 1 (GHSR) of Sus scrofa (Pig).